Here is a 130-residue protein sequence, read N- to C-terminus: Histone H2B.2 (130 aa).

The span at 1-19 (MAPKAEKKPASKAPAEKKP) shows a compositional bias: basic and acidic residues. Residues 1–38 (MAPKAEKKPASKAPAEKKPAAKKTASTDGAKKRTKARK) are disordered. 2 positions are modified to N6-acetyllysine; alternate: Lys7 and Lys8. Residues Lys7 and Lys8 each participate in a glycyl lysine isopeptide (Lys-Gly) (interchain with G-Cter in SUMO); alternate cross-link. The residue at position 11 (Ser11) is a Phosphoserine. Lys12 is modified (N6-acetyllysine). The residue at position 17 (Lys17) is an N6-acetyllysine; alternate. A Glycyl lysine isopeptide (Lys-Gly) (interchain with G-Cter in SUMO); alternate cross-link involves residue Lys17. Lys18 participates in a covalent cross-link: Glycyl lysine isopeptide (Lys-Gly) (interchain with G-Cter in SUMO). Lys124 participates in a covalent cross-link: Glycyl lysine isopeptide (Lys-Gly) (interchain with G-Cter in ubiquitin).

Belongs to the histone H2B family. The nucleosome is a histone octamer containing two molecules each of H2A, H2B, H3 and H4 assembled in one H3-H4 heterotetramer and two H2A-H2B heterodimers. The octamer wraps approximately 147 bp of DNA. Monoubiquitinated by the UBC2-BRE1 complex to form H2BK123ub1. H2BK123ub1 gives a specific tag for epigenetic transcriptional activation and is also prerequisite for H3K4me and H3K79me formation. H2BK123ub1 also modulates the formation of double-strand breaks during meiosis and is a prerequisite for DNA-damage checkpoint activation. In terms of processing, phosphorylated by STE20 to form H2BS10ph during progression through meiotic prophase. May be correlated with chromosome condensation. Post-translationally, acetylated by GCN5 to form H2BK11ac and H2BK16ac. H2BK16ac can also be formed by ESA1. Acetylation of N-terminal lysines and particularly formation of H2BK11acK16ac has a positive effect on transcription. Sumoylation to form H2BK6su or H2BK7su, and probably also H2BK16su or H2BK17su, occurs preferentially near the telomeres and represses gene transcription.

It is found in the nucleus. It localises to the chromosome. Functionally, core component of nucleosome. Nucleosomes wrap and compact DNA into chromatin, limiting DNA accessibility to the cellular machineries which require DNA as a template. Histones thereby play a central role in transcription regulation, DNA repair, DNA replication and chromosomal stability. DNA accessibility is regulated via a complex set of post-translational modifications of histones, also called histone code, and nucleosome remodeling. The polypeptide is Histone H2B.2 (HTB2) (Candida albicans (strain SC5314 / ATCC MYA-2876) (Yeast)).